Consider the following 152-residue polypeptide: Transcriptional regulator MraZ (152 aa).

SpoVT-AbrB domains lie at 5-52 (ATTL…PLPE) and 81-124 (ADDC…NEDA).

This sequence belongs to the MraZ family. In terms of assembly, forms oligomers.

It localises to the cytoplasm. Its subcellular location is the nucleoid. The protein is Transcriptional regulator MraZ of Idiomarina loihiensis (strain ATCC BAA-735 / DSM 15497 / L2-TR).